A 221-amino-acid polypeptide reads, in one-letter code: MQLPLTPLSFSGTLLLMAMSNFLLWEHVTSSASPRLSTRNLYQRVVELSHCTHDLASKVFTDFNMKFGKSICRQKLMLYTCHTSSIPTPENREQVHQTNSEDLLKVTISVLQAWEEPVKHMVAAVAALPGTSDAMLSRAKELEERVLGLLEGLKIILNRIHPGAVENDYTFWSGWSDLQSSDEATRNIAFYTMGRCLRRDTHKVDNYLKVLKCRDIHNNNC.

Positions 1 to 30 (MQLPLTPLSFSGTLLLMAMSNFLLWEHVTS) are cleaved as a signal peptide. Cystine bridges form between Cys81-Cys196 and Cys213-Cys221.

This sequence belongs to the somatotropin/prolactin family.

It is found in the secreted. This chain is Prolactin-3B1 (PRL3B1), found in Mesocricetus auratus (Golden hamster).